The following is a 397-amino-acid chain: Acetate kinase (397 aa).

A Mg(2+)-binding site is contributed by Asn-7. Residue Lys-14 participates in ATP binding. Arg-91 is a binding site for substrate. Asp-148 acts as the Proton donor/acceptor in catalysis. Residues 208–212, 283–285, and 331–335 contribute to the ATP site; these read HIGNG, DMR, and GVGEN. Position 384 (Glu-384) interacts with Mg(2+).

This sequence belongs to the acetokinase family. In terms of assembly, homodimer. Mg(2+) serves as cofactor. It depends on Mn(2+) as a cofactor.

It is found in the cytoplasm. It carries out the reaction acetate + ATP = acetyl phosphate + ADP. Its pathway is metabolic intermediate biosynthesis; acetyl-CoA biosynthesis; acetyl-CoA from acetate: step 1/2. In terms of biological role, catalyzes the formation of acetyl phosphate from acetate and ATP. Can also catalyze the reverse reaction. The protein is Acetate kinase of Azobacteroides pseudotrichonymphae genomovar. CFP2.